A 271-amino-acid polypeptide reads, in one-letter code: Small ribosomal subunit protein uS2 (271 aa).

It belongs to the universal ribosomal protein uS2 family.

The chain is Small ribosomal subunit protein uS2 from Wolbachia pipientis subsp. Culex pipiens (strain wPip).